The following is an 84-amino-acid chain: Small ribosomal subunit protein bS20 (84 aa).

The tract at residues Met-1–Met-25 is disordered.

Belongs to the bacterial ribosomal protein bS20 family.

In terms of biological role, binds directly to 16S ribosomal RNA. The polypeptide is Small ribosomal subunit protein bS20 (Pediococcus pentosaceus (strain ATCC 25745 / CCUG 21536 / LMG 10740 / 183-1w)).